The primary structure comprises 176 residues: Disulfide bond formation protein B (176 aa).

Over 1 to 14 (MLRFLNQCSHGRGA) the chain is Cytoplasmic. The chain crosses the membrane as a helical span at residues 15-31 (WLLMAFTALALELTALW). Topologically, residues 32–49 (FQHVMLLKPCVLCIYERC) are periplasmic. The cysteines at positions 41 and 44 are disulfide-linked. The chain crosses the membrane as a helical span at residues 50–65 (ALFGVLGAALIGAIAP). The Cytoplasmic segment spans residues 66-71 (KTPLRY). The helical transmembrane segment at 72–89 (VAMVIWLYSAFRGVQLTY) threads the bilayer. At 90–144 (EHTMLQLYPSPFATCDFMARFPEWLPLDKWVPQVFVASGDCAERQWEFLGLEMPQ) the chain is on the periplasmic side. Residues Cys-104 and Cys-130 are joined by a disulfide bond. The chain crosses the membrane as a helical span at residues 145 to 163 (WLLGIFIAYLIVAVLVVIS). Residues 164–176 (QPFKAKKRDLFGR) are Cytoplasmic-facing.

This sequence belongs to the DsbB family.

Its subcellular location is the cell inner membrane. In terms of biological role, required for disulfide bond formation in some periplasmic proteins. Acts by oxidizing the DsbA protein. The polypeptide is Disulfide bond formation protein B (Escherichia coli O6:K15:H31 (strain 536 / UPEC)).